A 262-amino-acid polypeptide reads, in one-letter code: 14-3-3 protein I (262 aa).

This sequence belongs to the 14-3-3 family. As to quaternary structure, homodimer. Forms a complex composed of CDPK1, PKA regulatory subunit PKAr and 14-3-3I; the complex is formed in merozoites in response to low extracellular level of K(+) and may play a role in microneme secretion. Interacts with CDPK1 (when phosphorylated) in a Ca(2+)-independent manner; the interaction does not regulate CDPK1 catalytic activity but is required for merozoite invasion of host erythrocytes. Interacts with PKA regulatory subunit PKAr (when phosphorylated) in a Ca(2+)-dependent manner. Interacts with histone H3 (when phosphorylated at 'Ser-28' or when phosphorylated at 'Ser-28' and 'Ser-32').

The protein resides in the cell membrane. The protein localises to the cytoplasm. Its subcellular location is the nucleus. Adapter protein which binds to its partners, usually via a phosphoserine or phosphothreonine motif. Binding generally results in the modulation of the activity and/or cellular localization of the binding partner. Via its interaction with CDPK1 and PKAr, involved in merozoite microneme secretion and thus in merozoite invasion of host erythrocytes. The polypeptide is 14-3-3 protein I (Plasmodium falciparum (isolate 3D7)).